Reading from the N-terminus, the 445-residue chain is Selenocysteine lyase (445 aa).

Methionine 1 carries the post-translational modification N-acetylmethionine. Positions 1-28 are disordered; the sequence is MEAAVAPGRDAPAPAASQPSGCGKHNSP. A Phosphoserine modification is found at serine 129. Lysine 259 is subject to N6-(pyridoxal phosphate)lysine. Cysteine 388 functions as the S-selanylcysteine intermediate in the catalytic mechanism.

It belongs to the class-V pyridoxal-phosphate-dependent aminotransferase family. Homodimer. It depends on pyridoxal 5'-phosphate as a cofactor.

It is found in the cytoplasm. The protein resides in the cytosol. It catalyses the reaction L-selenocysteine + AH2 = hydrogenselenide + L-alanine + A + H(+). Its function is as follows. Catalyzes the decomposition of L-selenocysteine to L-alanine and elemental selenium. The polypeptide is Selenocysteine lyase (SCLY) (Homo sapiens (Human)).